Here is an 82-residue protein sequence, read N- to C-terminus: Small ribosomal subunit protein uS17 (82 aa).

This sequence belongs to the universal ribosomal protein uS17 family. As to quaternary structure, part of the 30S ribosomal subunit.

In terms of biological role, one of the primary rRNA binding proteins, it binds specifically to the 5'-end of 16S ribosomal RNA. This Paracoccus denitrificans (strain Pd 1222) protein is Small ribosomal subunit protein uS17.